Here is a 198-residue protein sequence, read N- to C-terminus: Mediator of RNA polymerase II transcription subunit 20 (198 aa).

It belongs to the Mediator complex subunit 20 family. As to quaternary structure, component of the Mediator complex.

Its subcellular location is the nucleus. Component of the Mediator complex, a coactivator involved in the regulated transcription of nearly all RNA polymerase II-dependent genes. Mediator functions as a bridge to convey information from gene-specific regulatory proteins to the basal RNA polymerase II transcription machinery. Mediator is recruited to promoters by direct interactions with regulatory proteins and serves as a scaffold for the assembly of a functional preinitiation complex with RNA polymerase II and the general transcription factors. This Caenorhabditis briggsae protein is Mediator of RNA polymerase II transcription subunit 20 (mdt-20).